A 374-amino-acid polypeptide reads, in one-letter code: uncharacterized protein (374 aa).

The first 26 residues, 1 to 26, serve as a signal peptide directing secretion; the sequence is MNNLIKAYAAGVMSAAFLFGSEGRVR.

This is an uncharacterized protein from Treponema pallidum (strain Nichols).